A 181-amino-acid chain; its full sequence is DNA-packaging protein NU1 homolog (181 aa).

To phage lambda DNA packaging protein NU1.

The sequence is that of DNA-packaging protein NU1 homolog (nohD) from Escherichia coli (strain K12).